The following is a 259-amino-acid chain: Phosphatidylserine decarboxylase proenzyme (259 aa).

Catalysis depends on charge relay system; for autoendoproteolytic cleavage activity residues aspartate 86, histidine 142, and serine 226. The active-site Schiff-base intermediate with substrate; via pyruvic acid; for decarboxylase activity is serine 226. Residue serine 226 is modified to Pyruvic acid (Ser); by autocatalysis.

The protein belongs to the phosphatidylserine decarboxylase family. PSD-B subfamily. Prokaryotic type I sub-subfamily. In terms of assembly, heterodimer of a large membrane-associated beta subunit and a small pyruvoyl-containing alpha subunit. Pyruvate is required as a cofactor. Is synthesized initially as an inactive proenzyme. Formation of the active enzyme involves a self-maturation process in which the active site pyruvoyl group is generated from an internal serine residue via an autocatalytic post-translational modification. Two non-identical subunits are generated from the proenzyme in this reaction, and the pyruvate is formed at the N-terminus of the alpha chain, which is derived from the carboxyl end of the proenzyme. The autoendoproteolytic cleavage occurs by a canonical serine protease mechanism, in which the side chain hydroxyl group of the serine supplies its oxygen atom to form the C-terminus of the beta chain, while the remainder of the serine residue undergoes an oxidative deamination to produce ammonia and the pyruvoyl prosthetic group on the alpha chain. During this reaction, the Ser that is part of the protease active site of the proenzyme becomes the pyruvoyl prosthetic group, which constitutes an essential element of the active site of the mature decarboxylase.

The protein localises to the cell membrane. It carries out the reaction a 1,2-diacyl-sn-glycero-3-phospho-L-serine + H(+) = a 1,2-diacyl-sn-glycero-3-phosphoethanolamine + CO2. It functions in the pathway phospholipid metabolism; phosphatidylethanolamine biosynthesis; phosphatidylethanolamine from CDP-diacylglycerol: step 2/2. Functionally, catalyzes the formation of phosphatidylethanolamine (PtdEtn) from phosphatidylserine (PtdSer). In Halalkalibacterium halodurans (strain ATCC BAA-125 / DSM 18197 / FERM 7344 / JCM 9153 / C-125) (Bacillus halodurans), this protein is Phosphatidylserine decarboxylase proenzyme.